Here is a 314-residue protein sequence, read N- to C-terminus: Protein OPG185 (314 aa).

Positions 1-16 (MTRLPILLLLISLVYA) are cleaved as a signal peptide. The Ig-like V-type domain occupies 17 to 121 (TPFPQTSKKI…NDTDKVDYEE (105 aa)). At 17 to 278 (TPFPQTSKKI…SNYKTKDFVE (262 aa)) the chain is on the virion surface side. Cysteines 34 and 103 form a disulfide. Residues Asn37, Asn69, Asn112, and Asn161 are each glycosylated (N-linked (GlcNAc...) asparagine; by host). Residues 193–202 (NTVSASSGES) are compositionally biased toward polar residues. The interval 193-214 (NTVSASSGESTTDETPEPITDK) is disordered. Asn253 carries N-linked (GlcNAc...) asparagine; by host glycosylation. A helical membrane pass occupies residues 279–302 (IFGITALIILSAVAIFCITYYIYN). Residues 303-314 (KRSRKYKTENKV) are Intravirion-facing.

This sequence belongs to the orthopoxvirus OPG185 family. As to quaternary structure, heterodimerizes with OPG040. The heterodimer OPG185-OPG040 interacts with components of the entry fusion complex OPG143 and OPG094. Heterodimer with C3/VPC protein; disulfide-linked. Glycosylated; contains phosphate and sulfate-substituted glycans. O-glycosylation is required for hemagglutination and hemadsorption activities of infected cell membranes.

It is found in the virion membrane. The protein localises to the host membrane. Prevents cell to cell fusion by interacting with and directing the viral OPG040 protein on the host plasma membrane. The OPG185-OPG040 complex associates with components of the entry fusion complex (EFC) presumably to avoid superinfection and syncytium formation. Via its interaction with C3/VCP protein, protects the infected cell and probably also the extracellular enveloped virus from complement attack. The sequence is that of Protein OPG185 (OPG185) from Bos taurus (Bovine).